Here is a 35-residue protein sequence, read N- to C-terminus: Riboflavin-binding protein (35 aa).

Cysteines 5 and 32 form a disulfide.

The protein belongs to the folate receptor family.

Its function is as follows. Required for the transport of riboflavin to the developing oocyte. In Struthio camelus (Common ostrich), this protein is Riboflavin-binding protein.